The following is a 72-amino-acid chain: NAD(P)H-quinone oxidoreductase subunit O (72 aa).

This sequence belongs to the complex I NdhO subunit family. NDH-1 can be composed of about 15 different subunits; different subcomplexes with different compositions have been identified which probably have different functions.

The protein resides in the cellular thylakoid membrane. It catalyses the reaction a plastoquinone + NADH + (n+1) H(+)(in) = a plastoquinol + NAD(+) + n H(+)(out). The enzyme catalyses a plastoquinone + NADPH + (n+1) H(+)(in) = a plastoquinol + NADP(+) + n H(+)(out). Functionally, NDH-1 shuttles electrons from an unknown electron donor, via FMN and iron-sulfur (Fe-S) centers, to quinones in the respiratory and/or the photosynthetic chain. The immediate electron acceptor for the enzyme in this species is believed to be plastoquinone. Couples the redox reaction to proton translocation, and thus conserves the redox energy in a proton gradient. Cyanobacterial NDH-1 also plays a role in inorganic carbon-concentration. The chain is NAD(P)H-quinone oxidoreductase subunit O from Synechococcus sp. (strain JA-3-3Ab) (Cyanobacteria bacterium Yellowstone A-Prime).